Consider the following 212-residue polypeptide: Photosynthetic NDH subunit of subcomplex B 5, chloroplastic (212 aa).

Residues 1-48 (MATVTILSPKSIPKVTDSKFGARVSDQIVNVVKCGKSGRRLKLAKLVS) constitute a chloroplast transit peptide. 2 helical membrane passes run 115–135 (FQGLISCMFLPAIALGMYFDA) and 136–156 (PGEYLFIGAALFTVVFCIIEM).

As to quaternary structure, part of the chloroplast NDH complex, composed of a mixture of chloroplast and nucleus encoded subunits. Component of the NDH subcomplex B, at least composed of PnsB1, PnsB2, PnsB3, PnsB4 and PnsB5.

It localises to the plastid. Its subcellular location is the chloroplast membrane. NDH shuttles electrons from NAD(P)H:plastoquinone, via FMN and iron-sulfur (Fe-S) centers, to quinones in the photosynthetic chain and possibly in a chloroplast respiratory chain. The immediate electron acceptor for the enzyme in this species is believed to be plastoquinone. Couples the redox reaction to proton translocation, and thus conserves the redox energy in a proton gradient. This Arabidopsis thaliana (Mouse-ear cress) protein is Photosynthetic NDH subunit of subcomplex B 5, chloroplastic.